We begin with the raw amino-acid sequence, 124 residues long: Ribonuclease pancreatic (124 aa).

Residues 1 to 13 (KESAAAKFERQHI) are compositionally biased toward basic and acidic residues. The disordered stretch occupies residues 1–23 (KESAAAKFERQHIDSSTSSVSSS). Substrate-binding residues include K7 and R10. H12 serves as the catalytic Proton acceptor. Disulfide bonds link C26/C84, C40/C95, C58/C110, and C65/C72. An N-linked (GlcNAc...) asparagine glycan is attached at N34. Substrate-binding positions include 41–45 (KPVNT), K66, and R85. Residue H119 is the Proton donor of the active site.

It belongs to the pancreatic ribonuclease family. In terms of assembly, monomer. Interacts with and forms tight 1:1 complexes with RNH1. Dimerization of two such complexes may occur. Interaction with RNH1 inhibits this protein. In terms of tissue distribution, pancreas.

It localises to the secreted. It catalyses the reaction an [RNA] containing cytidine + H2O = an [RNA]-3'-cytidine-3'-phosphate + a 5'-hydroxy-ribonucleotide-3'-[RNA].. The enzyme catalyses an [RNA] containing uridine + H2O = an [RNA]-3'-uridine-3'-phosphate + a 5'-hydroxy-ribonucleotide-3'-[RNA].. In terms of biological role, endonuclease that catalyzes the cleavage of RNA on the 3' side of pyrimidine nucleotides. Acts on single-stranded and double-stranded RNA. The protein is Ribonuclease pancreatic (RNASE1) of Giraffa camelopardalis (Giraffe).